The primary structure comprises 55 residues: ATP synthase protein 8 (55 aa).

The chain crosses the membrane as a helical span at residues 8–28 (WWIVNFSLIWASVLIVISLLL). The interval 34–55 (NSAGQSSSSLTLNKTTTNWQWL) is disordered. Low complexity predominate over residues 39–55 (SSSSLTLNKTTTNWQWL).

It belongs to the ATPase protein 8 family. F-type ATPases have 2 components, CF(1) - the catalytic core - and CF(0) - the membrane proton channel.

The protein resides in the mitochondrion membrane. Its function is as follows. Mitochondrial membrane ATP synthase (F(1)F(0) ATP synthase or Complex V) produces ATP from ADP in the presence of a proton gradient across the membrane which is generated by electron transport complexes of the respiratory chain. F-type ATPases consist of two structural domains, F(1) - containing the extramembraneous catalytic core and F(0) - containing the membrane proton channel, linked together by a central stalk and a peripheral stalk. During catalysis, ATP synthesis in the catalytic domain of F(1) is coupled via a rotary mechanism of the central stalk subunits to proton translocation. Part of the complex F(0) domain. Minor subunit located with subunit a in the membrane. The polypeptide is ATP synthase protein 8 (MT-ATP8) (Strongylocentrotus purpuratus (Purple sea urchin)).